Reading from the N-terminus, the 158-residue chain is Dihydroneopterin triphosphate diphosphatase (158 aa).

Substrate contacts are provided by Lys-14, Arg-36, and Thr-47. In terms of domain architecture, Nudix hydrolase spans 14–153 (KNNQSVLVVI…NNAEAIKKYL (140 aa)). A Nudix box motif is present at residues 48–69 (GTIESDETPKKTAIRELWEEVR). Residues Glu-63 and Glu-67 each contribute to the Mg(2+) site. Residue 88–91 (FEIF) coordinates substrate. Glu-124 is a binding site for Mg(2+). Ser-142 serves as a coordination point for substrate.

It belongs to the Nudix hydrolase family. The cofactor is Mg(2+).

It carries out the reaction 7,8-dihydroneopterin 3'-triphosphate + H2O = 7,8-dihydroneopterin 3'-phosphate + diphosphate + H(+). Functionally, catalyzes the hydrolysis of dihydroneopterin triphosphate to dihydroneopterin monophosphate and pyrophosphate. Required for efficient folate biosynthesis. Can also hydrolyze nucleoside triphosphates with a preference for dATP. This Haemophilus influenzae (strain ATCC 51907 / DSM 11121 / KW20 / Rd) protein is Dihydroneopterin triphosphate diphosphatase (nudB).